We begin with the raw amino-acid sequence, 395 residues long: Flap endonuclease 1 (395 aa).

Residues M1–K104 are N-domain. Residue D34 coordinates Mg(2+). The DNA site is built by R47 and R70. 5 residues coordinate Mg(2+): D86, E158, E160, D179, and D181. Residues D122–H253 are I-domain. E158 contacts DNA. 2 residues coordinate DNA: G231 and D233. D233 contributes to the Mg(2+) binding site. The interaction with PCNA stretch occupies residues Q341–F349. Residues K359 to G395 form a disordered region. A compositionally biased stretch (basic and acidic residues) spans R364–A383. A compositionally biased stretch (basic residues) spans K384–G395.

Belongs to the XPG/RAD2 endonuclease family. FEN1 subfamily. In terms of assembly, interacts with PCNA. Three molecules of fen1 bind to one PCNA trimer with each molecule binding to one PCNA monomer. PCNA stimulates the nuclease activity without altering cleavage specificity. Mg(2+) serves as cofactor. In terms of processing, phosphorylated. Phosphorylation upon DNA damage induces relocalization to the nuclear plasma.

It is found in the nucleus. The protein resides in the nucleolus. It localises to the nucleoplasm. The protein localises to the mitochondrion. Its function is as follows. Structure-specific nuclease with 5'-flap endonuclease and 5'-3' exonuclease activities involved in DNA replication and repair. During DNA replication, cleaves the 5'-overhanging flap structure that is generated by displacement synthesis when DNA polymerase encounters the 5'-end of a downstream Okazaki fragment. It enters the flap from the 5'-end and then tracks to cleave the flap base, leaving a nick for ligation. Also involved in the long patch base excision repair (LP-BER) pathway, by cleaving within the apurinic/apyrimidinic (AP) site-terminated flap. Acts as a genome stabilization factor that prevents flaps from equilibrating into structures that lead to duplications and deletions. Also possesses 5'-3' exonuclease activity on nicked or gapped double-stranded DNA, and exhibits RNase H activity. Also involved in replication and repair of rDNA and in repairing mitochondrial DNA. In Pyrenophora tritici-repentis (strain Pt-1C-BFP) (Wheat tan spot fungus), this protein is Flap endonuclease 1 (fen1).